The sequence spans 322 residues: tRNA uridine(34) hydroxylase (322 aa).

Residues 125-219 form the Rhodanese domain; that stretch reads QDPNTIVIDA…YGKDPEVQGK (95 aa). The active-site Cysteine persulfide intermediate is the C179.

The protein belongs to the TrhO family.

It catalyses the reaction uridine(34) in tRNA + AH2 + O2 = 5-hydroxyuridine(34) in tRNA + A + H2O. Functionally, catalyzes oxygen-dependent 5-hydroxyuridine (ho5U) modification at position 34 in tRNAs. The polypeptide is tRNA uridine(34) hydroxylase (Bacillus subtilis (strain 168)).